Reading from the N-terminus, the 198-residue chain is Na(+)-translocating NADH-quinone reductase subunit E (198 aa).

Helical transmembrane passes span 11-31 (AVFI…FLAV), 35-55 (VSPA…AVPV), 77-97 (FLNF…LEMV), 110-130 (GIFL…SFMV), 140-160 (IVYG…LAGL), and 176-196 (LGIT…FSGI).

It belongs to the NqrDE/RnfAE family. As to quaternary structure, composed of six subunits; NqrA, NqrB, NqrC, NqrD, NqrE and NqrF.

Its subcellular location is the cell inner membrane. It carries out the reaction a ubiquinone + n Na(+)(in) + NADH + H(+) = a ubiquinol + n Na(+)(out) + NAD(+). Its function is as follows. NQR complex catalyzes the reduction of ubiquinone-1 to ubiquinol by two successive reactions, coupled with the transport of Na(+) ions from the cytoplasm to the periplasm. NqrA to NqrE are probably involved in the second step, the conversion of ubisemiquinone to ubiquinol. This Haemophilus influenzae (strain ATCC 51907 / DSM 11121 / KW20 / Rd) protein is Na(+)-translocating NADH-quinone reductase subunit E.